Consider the following 692-residue polypeptide: Protein artemis (692 aa).

The residue at position 380 (threonine 380) is a Phosphothreonine. Serine 385 bears the Phosphoserine mark. Disordered regions lie at residues 503 to 555 (RLEN…DSQS) and 640 to 660 (STNA…PEAE). Residues 507–520 (FPSSTEAGGSQSPK) show a composition bias toward polar residues. Positions 530–543 (THISSQNSSQSTHI) are enriched in low complexity. Composition is skewed to polar residues over residues 544–555 (TEQGSQGWDSQS) and 640–650 (STNADSQSSSD). Serine 645 carries the post-translational modification Phosphoserine; by ATM.

The protein belongs to the DNA repair metallo-beta-lactamase (DRMBL) family. In terms of assembly, interacts with LIG4; the interaction is direct. Interacts with ATM. Interacts with BRCA1. Interacts with PRKDC. Interacts with TP53BP1. Also exhibits ATM- and phosphorylation-dependent interaction with the MRN complex, composed of MRE11, RAD50, and NBN. Post-translationally, phosphorylation on undefined residues by PRKDC may stimulate endonucleolytic activity on 5' and 3' hairpins and overhangs. PRKDC must remain present, even after phosphorylation, for efficient hairpin opening. Also phosphorylated by ATM in response to ionizing radiation (IR) and by ATR in response to ultraviolet (UV) radiation.

It localises to the nucleus. In terms of biological role, required for V(D)J recombination, the process by which exons encoding the antigen-binding domains of immunoglobulins and T-cell receptor proteins are assembled from individual V, (D), and J gene segments. V(D)J recombination is initiated by the lymphoid specific RAG endonuclease complex, which generates site specific DNA double strand breaks (DSBs). These DSBs present two types of DNA end structures: hairpin sealed coding ends and phosphorylated blunt signal ends. These ends are independently repaired by the non homologous end joining (NHEJ) pathway to form coding and signal joints respectively. This protein exhibits single-strand specific 5'-3' exonuclease activity in isolation, and acquires endonucleolytic activity on 5' and 3' hairpins and overhangs when in a complex with PRKDC. The latter activity is required specifically for the resolution of closed hairpins prior to the formation of the coding joint. May also be required for the repair of complex DSBs induced by ionizing radiation, which require substantial end-processing prior to religation by NHEJ. This Pongo abelii (Sumatran orangutan) protein is Protein artemis (DCLRE1C).